The sequence spans 724 residues: Ribosomal RNA large subunit methyltransferase K/L (724 aa).

The region spanning 42–153 (DAQRLVLWSR…KGRATLSVDL (112 aa)) is the THUMP domain.

Belongs to the methyltransferase superfamily. RlmKL family.

The protein localises to the cytoplasm. It carries out the reaction guanosine(2445) in 23S rRNA + S-adenosyl-L-methionine = N(2)-methylguanosine(2445) in 23S rRNA + S-adenosyl-L-homocysteine + H(+). The catalysed reaction is guanosine(2069) in 23S rRNA + S-adenosyl-L-methionine = N(2)-methylguanosine(2069) in 23S rRNA + S-adenosyl-L-homocysteine + H(+). In terms of biological role, specifically methylates the guanine in position 2445 (m2G2445) and the guanine in position 2069 (m7G2069) of 23S rRNA. In Xylella fastidiosa (strain 9a5c), this protein is Ribosomal RNA large subunit methyltransferase K/L.